The following is a 43-amino-acid chain: Kappa-actitoxin-Avd4p (43 aa).

Cystine bridges form between Cys4-Cys39, Cys6-Cys32, and Cys22-Cys40.

The protein localises to the secreted. It is found in the nematocyst. Its function is as follows. Blocks Kv3 voltage-gated potassium channels. Reduces blood pressure. This chain is Kappa-actitoxin-Avd4p, found in Anemonia viridis (Snakelocks anemone).